The chain runs to 184 residues: Ribosome-recycling factor (184 aa).

Belongs to the RRF family.

The protein localises to the cytoplasm. Functionally, responsible for the release of ribosomes from messenger RNA at the termination of protein biosynthesis. May increase the efficiency of translation by recycling ribosomes from one round of translation to another. The sequence is that of Ribosome-recycling factor from Acinetobacter baylyi (strain ATCC 33305 / BD413 / ADP1).